Reading from the N-terminus, the 2108-residue chain is General negative regulator of transcription subunit 1 (2108 aa).

Coiled coils occupy residues 795–813 (NVTL…KSLT) and 1021–1046 (MQQH…QQQQ). The tract at residues 1323–1352 (QQQQLQKSRLNQPSQSAQPPGVNVPNPQGG) is disordered. Residues 1329-1339 (KSRLNQPSQSA) are compositionally biased toward polar residues. Over residues 1340-1352 (QPPGVNVPNPQGG) the composition is skewed to low complexity. Residue Thr2102 is modified to Phosphothreonine.

The protein belongs to the CNOT1 family. Forms a NOT protein complex that comprises NOT1, NOT2, NOT3, NOT4 and NOT5. Subunit of the 1.0 MDa CCR4-NOT core complex that contains CCR4, CAF1, NOT1, NOT2, NOT3, NOT4, NOT5, CAF40 and CAF130. In the complex interacts with CCR4, POP2, NOT2, NOT4 and NOT5. The core complex probably is part of a less characterized 1.9 MDa CCR4-NOT complex.

Its subcellular location is the cytoplasm. It is found in the nucleus. Functionally, acts as a component of the CCR4-NOT core complex, which in the nucleus seems to be a general transcription factor, and in the cytoplasm the major mRNA deadenylase involved in mRNA turnover. The NOT protein subcomplex negatively regulates the basal and activated transcription of many genes. Preferentially affects TC-type TATA element-dependent transcription. Could directly or indirectly inhibit component(s) of the general transcription machinery. This Saccharomyces cerevisiae (strain ATCC 204508 / S288c) (Baker's yeast) protein is General negative regulator of transcription subunit 1 (CDC39).